The sequence spans 168 residues: Cell division inhibitor SulA (168 aa).

Residues 106–112 are ftsZ binding; it reads ALLTGNY. The lon protease binding stretch occupies residues 161-168; it reads KIHSYLYH.

This sequence belongs to the SulA family. In terms of assembly, interacts with FtsZ. Is rapidly cleaved and degraded by the Lon protease once DNA damage is repaired.

In terms of biological role, component of the SOS system and an inhibitor of cell division. Accumulation of SulA causes rapid cessation of cell division and the appearance of long, non-septate filaments. In the presence of GTP, binds a polymerization-competent form of FtsZ in a 1:1 ratio, thus inhibiting FtsZ polymerization and therefore preventing it from participating in the assembly of the Z ring. This mechanism prevents the premature segregation of damaged DNA to daughter cells during cell division. This is Cell division inhibitor SulA from Yersinia pestis bv. Antiqua (strain Antiqua).